Here is a 526-residue protein sequence, read N- to C-terminus: Fusicoccadiene 8-ol C-16-hydroxylase (526 aa).

A helical membrane pass occupies residues 34–56 (AFVGFSVLGLTLLFSKLFYNAYL). Residues N309, N418, and N434 are each glycosylated (N-linked (GlcNAc...) asparagine). Position 470 (C470) interacts with heme.

Belongs to the cytochrome P450 family. Heme is required as a cofactor.

It localises to the membrane. It functions in the pathway mycotoxin biosynthesis. In terms of biological role, cytochrome P450 monooxygenase; part of the 2 gene clusters that mediate the biosynthesis of fusicoccins, diterpene glucosides that display phytohormone-like activity and function as potent activators of plasma membrane H(+)-ATPases in plants by modifying 14-3-3 proteins and cause the plant disease constriction canker. The first step in the pathway is performed by the fusicoccadiene synthase PaFS that possesses both prenyl transferase and terpene cyclase activity, converting isopentenyl diphosphate and dimethylallyl diphosphate into geranylgeranyl diphosphate (GGDP) and successively converting GGDP into fusicocca-2,10(14)-diene, a precursor for fusicoccin H. The second step is the oxidation at the C-8 position by the cytochrome P450 monooxygenase PaP450-2 to yield fusicocca-2,10(14)-diene-8-beta-ol. The cytochrome P450 monooxygenase PaP450-1 then catalyzes the hydroxylation at the C-16 position to produce fusicocca-2,10(14)-diene-8-beta,16-diol. The dioxygenase fc-dox then catalyzes the 16-oxydation of fusicocca-2,10(14)-diene-8-beta,16-diol to yield an aldehyde (8-beta-hydroxyfusicocca-1,10(14)-dien-16-al). The short-chain dehydrogenase/reductase fc-sdr catalyzes the reduction of the aldehyde to yield fusicocca-1,10(14)-diene-8-beta,16-diol. The next step is the hydroxylation at C-9 performed by the cytochrome P450 monooxygenase PaP450-3 that leads to fusicoccin H aglycon which is glycosylated to fusicoccin H by the O-glycosyltransferase PaGT. Hydroxylation at C-12 by the cytochrome P450 monooxygenase PaP450-4 leads then to the production of fusicoccin Q and is followed by methylation by the O-methyltransferase PaMT to yield fusicoccin P. Fusicoccin P is further converted to fusicoccin J via prenylation by the O-glucose prenyltransferase PaPT. Cytochrome P450 monooxygenase PaP450-5 then performs hydroxylation at C-19 to yield dideacetyl-fusicoccin A which is acetylated to 3'-O-deacetyl-fusicoccin A by the O-acetyltransferase PaAT-2. Finally, a another acetylation by the O-acetyltransferase PaAT-1 yields fusicoccin A. The sequence is that of Fusicoccadiene 8-ol C-16-hydroxylase from Phomopsis amygdali (Fusicoccum amygdali).